The primary structure comprises 383 residues: Queuine tRNA-ribosyltransferase (383 aa).

The Proton acceptor role is filled by Asp92. Substrate contacts are provided by residues 92–96, Asp146, Gln190, and Gly217; that span reads DSGGF. An RNA binding region spans residues 248-254; sequence GVGKPED. Asp267 acts as the Nucleophile in catalysis. Positions 272–276 are RNA binding; important for wobble base 34 recognition; it reads TRNAR. 4 residues coordinate Zn(2+): Cys310, Cys312, Cys315, and His341.

This sequence belongs to the queuine tRNA-ribosyltransferase family. As to quaternary structure, homodimer. Within each dimer, one monomer is responsible for RNA recognition and catalysis, while the other monomer binds to the replacement base PreQ1. Zn(2+) is required as a cofactor.

The catalysed reaction is 7-aminomethyl-7-carbaguanine + guanosine(34) in tRNA = 7-aminomethyl-7-carbaguanosine(34) in tRNA + guanine. It functions in the pathway tRNA modification; tRNA-queuosine biosynthesis. Catalyzes the base-exchange of a guanine (G) residue with the queuine precursor 7-aminomethyl-7-deazaguanine (PreQ1) at position 34 (anticodon wobble position) in tRNAs with GU(N) anticodons (tRNA-Asp, -Asn, -His and -Tyr). Catalysis occurs through a double-displacement mechanism. The nucleophile active site attacks the C1' of nucleotide 34 to detach the guanine base from the RNA, forming a covalent enzyme-RNA intermediate. The proton acceptor active site deprotonates the incoming PreQ1, allowing a nucleophilic attack on the C1' of the ribose to form the product. After dissociation, two additional enzymatic reactions on the tRNA convert PreQ1 to queuine (Q), resulting in the hypermodified nucleoside queuosine (7-(((4,5-cis-dihydroxy-2-cyclopenten-1-yl)amino)methyl)-7-deazaguanosine). The protein is Queuine tRNA-ribosyltransferase of Psychrobacter sp. (strain PRwf-1).